A 279-amino-acid polypeptide reads, in one-letter code: Reaction center protein L chain (279 aa).

3 helical membrane passes run 33 to 56 (GFFGVTTLFFSVLGTALIIWGASQ), 85 to 113 (GLWQIITVCAIGAFVSWALREVEICRKLG), and 116 to 141 (YHVPIAFSFAILAYVTLVVIRPILMG). (7R,8Z)-bacteriochlorophyll b contacts are provided by His154 and His174. A helical transmembrane segment spans residues 171-200 (NPAHMLAITFFFTTTLAMSMHGGLILSAAN). His191 is a binding site for Fe cation. Residue Phe217 participates in a ubiquinone binding. The helical transmembrane segment at 226–252 (GSLGIHRLGLFLALSAAFWSAVCIVIS) threads the bilayer. His231 lines the Fe cation pocket.

This sequence belongs to the reaction center PufL/M/PsbA/D family. Reaction center is composed of four bacteriochlorophylls, two bacteriopheophytins, two ubiquinones, one iron, and three highly hydrophobic polypeptide chains (designated L, M, and H).

The protein resides in the cell inner membrane. In terms of biological role, the reaction center is a membrane-bound complex that mediates the initial photochemical event in the electron transfer process of photosynthesis. In Rubrivivax gelatinosus (Rhodocyclus gelatinosus), this protein is Reaction center protein L chain (pufL).